A 47-amino-acid polypeptide reads, in one-letter code: Protein 0.5 (47 aa).

An N-terminal signal peptide occupies residues 1-23 (MYMLTIGLLTALGLAVGASFGKA). The helical transmembrane segment at 24-43 (LGVAVGSYFTACIIIGIIKG) threads the bilayer.

The protein localises to the host membrane. This Escherichia phage T7 (Bacteriophage T7) protein is Protein 0.5.